The sequence spans 167 residues: EF-hand calcium-binding domain-containing protein 11 (167 aa).

EF-hand domains are found at residues 17–52 (AERKKIELVFHQCDVDKKGYMSREDLKIAVVMLFGY), 91–126 (DPYEKARQIFSAFDVHCRGFLKLDDFKSAFKRVAPR), and 127–162 (LQERTVLEAFRHADQDSDGHISFKDFENIISYGLAN). Positions 140, 142, 144, 146, and 151 each coordinate Ca(2+).

This Danio rerio (Zebrafish) protein is EF-hand calcium-binding domain-containing protein 11 (efcab11).